The chain runs to 449 residues: Exodeoxyribonuclease 7 large subunit (449 aa).

The protein belongs to the XseA family. Heterooligomer composed of large and small subunits.

Its subcellular location is the cytoplasm. The enzyme catalyses Exonucleolytic cleavage in either 5'- to 3'- or 3'- to 5'-direction to yield nucleoside 5'-phosphates.. In terms of biological role, bidirectionally degrades single-stranded DNA into large acid-insoluble oligonucleotides, which are then degraded further into small acid-soluble oligonucleotides. This Salmonella paratyphi A (strain ATCC 9150 / SARB42) protein is Exodeoxyribonuclease 7 large subunit.